Consider the following 59-residue polypeptide: Small, acid-soluble spore protein H 2 (59 aa).

The protein belongs to the SspH family.

It is found in the spore core. The sequence is that of Small, acid-soluble spore protein H 2 from Bacillus cytotoxicus (strain DSM 22905 / CIP 110041 / 391-98 / NVH 391-98).